A 529-amino-acid polypeptide reads, in one-letter code: Potassium voltage-gated channel subfamily A member 6 (529 aa).

Residues 1–35 (MRSEKSLTLAAPGEVRGPEGEQQDAGEFQEAEGGG) form a disordered region. Residues 1–171 (MRSEKSLTLA…LLFEYPESSG (171 aa)) are Cytoplasmic-facing. The residue at position 3 (serine 3) is a Phosphoserine. The span at 21 to 30 (EQQDAGEFQE) shows a compositional bias: acidic residues. Residues 172-193 (PARGIAIVSVLVILISIVIFCL) traverse the membrane as a helical segment. At 194-262 (ETLPQFRADG…TLGGSFFTDP (69 aa)) the chain is on the extracellular side. The interval 203 to 238 (GRGGSNEGSGTRLSPASRSHEEEDEDEDSYAFPGSI) is disordered. Positions 210-219 (GSGTRLSPAS) are enriched in polar residues. Residues 263–284 (FFLVETLCIVWFTFELLVRFSA) form a helical membrane-spanning segment. The S-palmitoyl cysteine moiety is linked to residue cysteine 285. At 285–295 (CPSKAAFFRNI) the chain is on the cytoplasmic side. A helical transmembrane segment spans residues 296–316 (MNIIDLVAIFPYFITLGTELV). At 317–337 (QRHEQQSVSGGSGQNGQQAMS) the chain is on the extracellular side. A helical; Voltage-sensor transmembrane segment spans residues 338 to 358 (LAILRVIRLVRVFRIFKLSRH). At 359–373 (SKGLQILGKTLQASM) the chain is on the cytoplasmic side. The segment at 360–373 (KGLQILGKTLQASM) is S4-S5 linker. Residues 374-395 (RELGLLIFFLFIGVILFSSAVY) form a helical membrane-spanning segment. At 396–409 (FAEADDVDSLFPSI) the chain is on the extracellular side. The helical intramembrane region spans 410-421 (PDAFWWAVVTMT). The Selectivity filter motif lies at 422–427 (TVGYGD). An intramembrane segment occupies 422-429 (TVGYGDMY). Residues 430-436 (PMTVGGK) lie on the Extracellular side of the membrane. A helical transmembrane segment spans residues 437–465 (IVGSLCAIAGVLTIALPVPVIVSNFNYFY). Residues 466 to 529 (HRETEQEEQG…YAEKRMLTEV (64 aa)) are Cytoplasmic-facing. The segment at 488-513 (DLKATDNGLGKPDFAEASRERRPSYL) is disordered. A compositionally biased stretch (basic and acidic residues) spans 500–510 (DFAEASRERRP). Serine 511 is modified (phosphoserine; by PKA). The PDZ-binding motif lies at 527–529 (TEV).

Belongs to the potassium channel family. A (Shaker) (TC 1.A.1.2) subfamily. Kv1.6/KCNA6 sub-subfamily. In terms of assembly, homotetramer and heterotetramer of potassium channel proteins. Interacts with KCNAB1 and KCNAB2.

Its subcellular location is the cell membrane. The enzyme catalyses K(+)(in) = K(+)(out). Its function is as follows. Voltage-gated potassium channel that mediates transmembrane potassium transport in excitable membranes. Forms tetrameric potassium-selective channels through which potassium ions pass in accordance with their electrochemical gradient. The channel alternates between opened and closed conformations in response to the voltage difference across the membrane. Can form functional homotetrameric channels and heterotetrameric channels that contain variable proportions of KCNA1, KCNA2, KCNA4, KCNA6, and possibly other family members as well; channel properties depend on the type of alpha subunits that are part of the channel. Channel properties are modulated by cytoplasmic beta subunits that regulate the subcellular location of the alpha subunits and promote rapid inactivation. Homotetrameric channels display rapid activation and slow inactivation. This is Potassium voltage-gated channel subfamily A member 6 (Kcna6) from Mus musculus (Mouse).